Consider the following 962-residue polypeptide: Putative primase C962R (962 aa).

The region spanning 607 to 775 is the SF3 helicase domain; sequence ELDARLWIMF…PDPNNSYEKK (169 aa). Residue 636-643 participates in ATP binding; it reads GGGCNGKT.

This sequence belongs to the asfivirus helicase C962R family.

The sequence is that of Putative primase C962R from African swine fever virus (isolate Pig/Kenya/KEN-50/1950) (ASFV).